The sequence spans 173 residues: Ribosome maturation factor RimM (173 aa).

In terms of domain architecture, PRC barrel spans 98–170 (EDEYYWCDLI…RMLITPLEGL (73 aa)).

The protein belongs to the RimM family. Binds ribosomal protein uS19.

It is found in the cytoplasm. Its function is as follows. An accessory protein needed during the final step in the assembly of 30S ribosomal subunit, possibly for assembly of the head region. Essential for efficient processing of 16S rRNA. May be needed both before and after RbfA during the maturation of 16S rRNA. It has affinity for free ribosomal 30S subunits but not for 70S ribosomes. This chain is Ribosome maturation factor RimM, found in Pelobacter propionicus (strain DSM 2379 / NBRC 103807 / OttBd1).